The chain runs to 447 residues: MRVVHVASEVFPFSRSGGLGDVLAALPAEQARLGANVTVVSPWYATLSGTPQEVWRGEVPGLGPVGVGELRASGVRFLFVSLPAFERPGLYHPDDVERFCAFGRAVLPVLQALGAVPDVLHGHDWQAGLVVAHAHLAGWRTAFTIHNLQYQGRWNLAEARTWTGLPDWTFSPEGVEFYGDLNLMKAGLVFAEQVTTVSPTYAREITTPQYGEGLEGVLIRLALEGRLSGILNGLDQDRWNPRTDPDIRPYADPAGKAANGSVLRAEFGLDDAPILGVVSRLANQKGIDLLIEALPELVERWNVVVLGGGDPLLTAALHGWAYHPRVAFVSGLNEALAHRIYAGADAFAMPSRFEPCGLSQMIALRYGTLPIVRETGGLVDTVPGDVGFRFADATTEALATACRDARTTLEDVVEWQSRMKRGMELDFSWEGSARHYLALYRHLCSVN.

An ADP-alpha-D-glucose-binding site is contributed by Arg15.

Belongs to the glycosyltransferase 1 family. Bacterial/plant glycogen synthase subfamily.

It catalyses the reaction [(1-&gt;4)-alpha-D-glucosyl](n) + ADP-alpha-D-glucose = [(1-&gt;4)-alpha-D-glucosyl](n+1) + ADP + H(+). It functions in the pathway glycan biosynthesis; glycogen biosynthesis. Functionally, synthesizes alpha-1,4-glucan chains using ADP-glucose. The chain is Glycogen synthase from Deinococcus geothermalis (strain DSM 11300 / CIP 105573 / AG-3a).